The sequence spans 512 residues: MEKLSHGLVTSRNMIRYKSSQLPERVLQFGEGNFLRGFIDWMIQQMNKQNVFNGRVVAIQPTPHGKVVPKLQEQDSLYTVWLRGIADGETVDHHEVITSISRGLNPYTNWQDVLEVAASPDISVVFSNTTEAGLTYLEEGYDKEKAPLSFPGKLAACLWHRYETLGWGEGSGLVIIPCELVEQNGKVLKELVCRYAKAWNFPQEFFTWLERENEFCHTLVDRIVPGFPSDTADECFERLGYEDILLTVAEPYHLFIIEGSERVRKLLPFNEAGLHVRWNHLEKHRNMKVRVLNGTHTFMFALSYLSGVDTVGEAMADEQLCSFIRKGLFEEIIPCVDAPEQEVTAFAETVLERFENPFLQHRLTDIGLNAVNKFRTRLMPTFNDYVAQTGEAPTYLLFSLAALINYYRGVEEDGPFLIGRRREDSYLIRDDLEVIEAFKVGWQQVNTGKLSLAQLCEDLLSKRELWGVDLSMERKVVDKVAESLQIIVEKGMRQAISGVLNQIGGNNHVHKQ.

An NAD(+)-binding site is contributed by valine 26 to glycine 37.

The protein belongs to the mannitol dehydrogenase family. UxaB subfamily.

It carries out the reaction D-altronate + NAD(+) = keto-D-tagaturonate + NADH + H(+). It functions in the pathway carbohydrate metabolism; pentose and glucuronate interconversion. This chain is Altronate oxidoreductase, found in Halalkalibacterium halodurans (strain ATCC BAA-125 / DSM 18197 / FERM 7344 / JCM 9153 / C-125) (Bacillus halodurans).